The sequence spans 382 residues: Alkane 1-monooxygenase 1 (382 aa).

4 consecutive transmembrane segments (helical) span residues 10-30, 43-63, 90-110, and 121-141; these read MLAI…SMPF, FWAF…DMLF, LATV…FVAF, and WILS…HELI. Fe cation is bound by residues His138 and His142. A helical transmembrane segment spans residues 146-166; it reads ALEQAAGGILLAAVCYAGFKV. Residues His168, His172, and His173 each contribute to the Fe cation site. The helical transmembrane segment at 236–256 threads the bilayer; the sequence is LALLVGFGWAFGWLGMVFFLG. Fe cation contacts are provided by His312, His315, and His316.

The protein belongs to the fatty acid desaturase type 1 family. AlkB subfamily. Requires Fe(3+) as cofactor.

It localises to the cell inner membrane. The catalysed reaction is octane + 2 reduced [rubredoxin] + O2 + 2 H(+) = 2 oxidized [rubredoxin] + octan-1-ol + H2O. It functions in the pathway hydrocarbon metabolism; alkane degradation. Functionally, catalyzes the hydroxylation of n-alkanes in the presence of a NADH-rubredoxin reductase and rubredoxin. It preferably hydroxylases C16-C24 hydrocarbons. The protein is Alkane 1-monooxygenase 1 (alkB1) of Pseudomonas aeruginosa (strain ATCC 15692 / DSM 22644 / CIP 104116 / JCM 14847 / LMG 12228 / 1C / PRS 101 / PAO1).